The chain runs to 734 residues: Photosystem I P700 chlorophyll a apoprotein A2 (734 aa).

The next 8 helical transmembrane spans lie at 46–69, 135–158, 175–199, 273–291, 330–353, 369–395, 417–439, and 517–535; these read IFAS…FHVA, LYTG…LHLQ, LNHH…HVAI, IAHH…GHMY, LHFQ…QHIY, AALY…IFFI, AIIS…LYVH, and FLVH…LILV. [4Fe-4S] cluster is bound by residues cysteine 559 and cysteine 568. The next 2 helical transmembrane spans lie at 575-596 and 643-665; these read AFYL…YWHW and LSVW…MFLI. Residues histidine 654, methionine 662, and tyrosine 670 each coordinate chlorophyll a. Tryptophan 671 contributes to the phylloquinone binding site. Residues 707 to 727 form a helical membrane-spanning segment; that stretch reads LVGLAHFSVGYIFTYAAFLIA.

It belongs to the PsaA/PsaB family. The PsaA/B heterodimer binds the P700 chlorophyll special pair and subsequent electron acceptors. PSI consists of a core antenna complex that captures photons, and an electron transfer chain that converts photonic excitation into a charge separation. The eukaryotic PSI reaction center is composed of at least 11 subunits. The cofactor is P700 is a chlorophyll a/chlorophyll a' dimer, A0 is one or more chlorophyll a, A1 is one or both phylloquinones and FX is a shared 4Fe-4S iron-sulfur center..

The protein resides in the plastid. It is found in the chloroplast thylakoid membrane. The catalysed reaction is reduced [plastocyanin] + hnu + oxidized [2Fe-2S]-[ferredoxin] = oxidized [plastocyanin] + reduced [2Fe-2S]-[ferredoxin]. Its function is as follows. PsaA and PsaB bind P700, the primary electron donor of photosystem I (PSI), as well as the electron acceptors A0, A1 and FX. PSI is a plastocyanin-ferredoxin oxidoreductase, converting photonic excitation into a charge separation, which transfers an electron from the donor P700 chlorophyll pair to the spectroscopically characterized acceptors A0, A1, FX, FA and FB in turn. Oxidized P700 is reduced on the lumenal side of the thylakoid membrane by plastocyanin. In Staurastrum punctulatum (Green alga), this protein is Photosystem I P700 chlorophyll a apoprotein A2.